The primary structure comprises 139 residues: Ribulose bisphosphate carboxylase small subunit, plasmid (139 aa).

Belongs to the RuBisCO small chain family. In terms of assembly, heterohexadecamer of 8 large and 8 small subunits.

In terms of biological role, ruBisCO catalyzes two reactions: the carboxylation of D-ribulose 1,5-bisphosphate, the primary event in carbon dioxide fixation, as well as the oxidative fragmentation of the pentose substrate. Both reactions occur simultaneously and in competition at the same active site. Although the small subunit is not catalytic it is essential for maximal activity. This is Ribulose bisphosphate carboxylase small subunit, plasmid from Cupriavidus necator (strain ATCC 17699 / DSM 428 / KCTC 22496 / NCIMB 10442 / H16 / Stanier 337) (Ralstonia eutropha).